The primary structure comprises 358 residues: Mitogen-activated protein kinase 1 (358 aa).

Alanine 2 carries the post-translational modification N-acetylalanine. Residues 23–311 enclose the Protein kinase domain; that stretch reads YTNLSYIGEG…VEQALAHPYL (289 aa). Serine 27 carries the phosphoserine; by SGK1 modification. Residues 29 to 37 and lysine 52 contribute to the ATP site; that span reads IGEGAYGMV. Catalysis depends on aspartate 147, which acts as the Proton acceptor. Threonine 183 is modified (phosphothreonine; by MAP2K1 and MAP2K2). The TXY motif lies at 183-185; that stretch reads TEY. A Phosphotyrosine; by MAP2K1 and MAP2K2 modification is found at tyrosine 185. Threonine 188 carries the post-translational modification Phosphothreonine; by autocatalysis. Phosphoserine occurs at positions 244, 246, and 282.

Belongs to the protein kinase superfamily. CMGC Ser/Thr protein kinase family. MAP kinase subfamily. In terms of assembly, binds both upstream activators and downstream substrates in multimolecular complexes. This interaction inhibits its tyrosine-kinase activity. Interacts with ADAM15, ARHGEF2, ARRB2, DAPK1 (via death domain), HSF4, IER3, IPO7, NISCH, SGK1, and isoform 1 of NEK2. Interacts (via phosphorylated form) with TPR (via C-terminal region and phosphorylated form); the interaction requires dimerization of MAPK1/ERK2 and increases following EGF stimulation. Interacts with MAP2K1. Interacts with DUSP6. Interacts (phosphorylated form) with CAV2 ('Tyr-19'-phosphorylated form); the interaction, promoted by insulin, leads to nuclear location and MAPK1 activation. Interacts with DCC. Interacts with MORG1. Interacts with PEA15. Interacts with MKNK2. MKNK2 isoform 1 binding prevents from dephosphorylation and inactivation. The phosphorylated form interacts with PML. Interacts with STYX. Interacts with CDK2AP2. Interacts with CAVIN4. Interacts with DUSP7; the interaction enhances DUSP7 phosphatase activity. Interacts with GIT1; this interaction is necessary for MAPK1 localization to focal adhesions. Interacts with ZNF263. Interacts with phosphoglycerate kinase PGK1; the interaction is direct, occurs under hypoxic conditions, and promotes interaction between PGK1 and PIN1. The cofactor is Mg(2+). Dually phosphorylated on Thr-183 and Tyr-185, which activates the enzyme. Ligand-activated ALK induces tyrosine phosphorylation. Dephosphorylated by PTPRJ at Tyr-185. Phosphorylated upon FLT3 and KIT signaling. Dephosphorylated by DUSP1 and DUSP2 at Thr-183 and Tyr-185. Post-translationally, ISGylated. In terms of processing, ubiquitinated by TRIM15 via 'Lys-63'-linked ubiquitination; leading to activation. Deubiquitinated by CYLD. As to expression, widely expressed.

Its subcellular location is the cytoplasm. The protein resides in the cytoskeleton. It localises to the spindle. It is found in the nucleus. The protein localises to the microtubule organizing center. Its subcellular location is the centrosome. The protein resides in the membrane. It localises to the caveola. It is found in the cell junction. The protein localises to the focal adhesion. It carries out the reaction L-seryl-[protein] + ATP = O-phospho-L-seryl-[protein] + ADP + H(+). The enzyme catalyses L-threonyl-[protein] + ATP = O-phospho-L-threonyl-[protein] + ADP + H(+). Phosphorylated by MAP2K1/MEK1 and MAP2K2/MEK2 on Thr-183 and Tyr-185 in response to external stimuli like insulin or NGF. Both phosphorylations are required for activity. This phosphorylation causes dramatic conformational changes, which enable full activation and interaction of MAPK1/ERK2 with its substrates. Phosphorylation on Ser-27 by SGK1 results in its activation by enhancing its interaction with MAP2K1/MEK1 and MAP2K2/MEK2. Dephosphorylated and inactivated by DUSP1, DUSP3, DUSP6 and DUSP9. Inactivated by pyrimidylpyrrole inhibitors. In terms of biological role, serine/threonine kinase which acts as an essential component of the MAP kinase signal transduction pathway. MAPK1/ERK2 and MAPK3/ERK1 are the 2 MAPKs which play an important role in the MAPK/ERK cascade. They participate also in a signaling cascade initiated by activated KIT and KITLG/SCF. Depending on the cellular context, the MAPK/ERK cascade mediates diverse biological functions such as cell growth, adhesion, survival and differentiation through the regulation of transcription, translation, cytoskeletal rearrangements. The MAPK/ERK cascade also plays a role in initiation and regulation of meiosis, mitosis, and postmitotic functions in differentiated cells by phosphorylating a number of transcription factors. About 160 substrates have already been discovered for ERKs. Many of these substrates are localized in the nucleus, and seem to participate in the regulation of transcription upon stimulation. However, other substrates are found in the cytosol as well as in other cellular organelles, and those are responsible for processes such as translation, mitosis and apoptosis. Moreover, the MAPK/ERK cascade is also involved in the regulation of the endosomal dynamics, including lysosome processing and endosome cycling through the perinuclear recycling compartment (PNRC); as well as in the fragmentation of the Golgi apparatus during mitosis. The substrates include transcription factors (such as ATF2, BCL6, ELK1, ERF, FOS, HSF4 or SPZ1), cytoskeletal elements (such as CANX, CTTN, GJA1, MAP2, MAPT, PXN, SORBS3 or STMN1), regulators of apoptosis (such as BAD, BTG2, CASP9, DAPK1, IER3, MCL1 or PPARG), regulators of translation (such as EIF4EBP1 and FXR1) and a variety of other signaling-related molecules (like ARHGEF2, DCC, FRS2 or GRB10). Protein kinases (such as RAF1, RPS6KA1/RSK1, RPS6KA3/RSK2, RPS6KA2/RSK3, RPS6KA6/RSK4, SYK, MKNK1/MNK1, MKNK2/MNK2, RPS6KA5/MSK1, RPS6KA4/MSK2, MAPKAPK3 or MAPKAPK5) and phosphatases (such as DUSP1, DUSP4, DUSP6 or DUSP16) are other substrates which enable the propagation the MAPK/ERK signal to additional cytosolic and nuclear targets, thereby extending the specificity of the cascade. Mediates phosphorylation of TPR in response to EGF stimulation. May play a role in the spindle assembly checkpoint. Phosphorylates PML and promotes its interaction with PIN1, leading to PML degradation. Phosphorylates CDK2AP2. Phosphorylates phosphoglycerate kinase PGK1 under hypoxic conditions to promote its targeting to the mitochondrion and suppress the formation of acetyl-coenzyme A from pyruvate. Functionally, acts as a transcriptional repressor. Binds to a [GC]AAA[GC] consensus sequence. Repress the expression of interferon gamma-induced genes. Seems to bind to the promoter of CCL5, DMP1, IFIH1, IFITM1, IRF7, IRF9, LAMP3, OAS1, OAS2, OAS3 and STAT1. Transcriptional activity is independent of kinase activity. In Mus musculus (Mouse), this protein is Mitogen-activated protein kinase 1.